Here is a 276-residue protein sequence, read N- to C-terminus: Formamidopyrimidine-DNA glycosylase (276 aa).

The Schiff-base intermediate with DNA role is filled by P2. The active-site Proton donor is E3. The Proton donor; for beta-elimination activity role is filled by K58. DNA is bound by residues H94, R112, and R157. An FPG-type zinc finger spans residues 242 to 276 (FVYDRAGEPCRVCGAPIRQIVQGQRSTYYCPNCQR). Catalysis depends on R266, which acts as the Proton donor; for delta-elimination activity.

This sequence belongs to the FPG family. In terms of assembly, monomer. It depends on Zn(2+) as a cofactor.

The catalysed reaction is Hydrolysis of DNA containing ring-opened 7-methylguanine residues, releasing 2,6-diamino-4-hydroxy-5-(N-methyl)formamidopyrimidine.. It catalyses the reaction 2'-deoxyribonucleotide-(2'-deoxyribose 5'-phosphate)-2'-deoxyribonucleotide-DNA = a 3'-end 2'-deoxyribonucleotide-(2,3-dehydro-2,3-deoxyribose 5'-phosphate)-DNA + a 5'-end 5'-phospho-2'-deoxyribonucleoside-DNA + H(+). In terms of biological role, involved in base excision repair of DNA damaged by oxidation or by mutagenic agents. Acts as a DNA glycosylase that recognizes and removes damaged bases. Has a preference for oxidized purines, such as 7,8-dihydro-8-oxoguanine (8-oxoG). Has AP (apurinic/apyrimidinic) lyase activity and introduces nicks in the DNA strand. Cleaves the DNA backbone by beta-delta elimination to generate a single-strand break at the site of the removed base with both 3'- and 5'-phosphates. The chain is Formamidopyrimidine-DNA glycosylase from Burkholderia thailandensis (strain ATCC 700388 / DSM 13276 / CCUG 48851 / CIP 106301 / E264).